The chain runs to 497 residues: Alkene monooxygenase system, oxygenase component subunit alpha (497 aa).

Residues glutamate 104, glutamate 134, histidine 137, glutamate 197, glutamate 231, and histidine 234 each coordinate Fe cation.

It belongs to the TmoA/XamoA family. The alkene monooxygenase multicomponent enzyme system is composed of an electron transfer component and a monooxygenase component interacting with the effector protein XamoD. The electron transfer component is composed of a ferredoxin reductase (XamoF) and a ferredoxin (XamoC), and the monooxygenase component is formed by a heterohexamer (dimer of heterotrimers) of two alpha subunits (XamoA), two beta subunits (XamoE) and two gamma subunits (XamoB). It depends on Fe(2+) as a cofactor.

It is found in the cytoplasm. It catalyses the reaction propene + NADH + O2 + H(+) = 1,2-epoxypropane + NAD(+) + H2O. Its activity is regulated as follows. Inhibited by propyne. Functionally, component of the alkene monooxygenase multicomponent enzyme system which catalyzes the O2- and NADH-dependent epoxidation of short chain (C2 to C6) alkenes to their corresponding epoxides. Also able to catalyze the oxidation of a number of chlorinated alkenes, including trichloroethylene, cis- and trans-1,2-dichloroethylene, vinyl chloride, 1-chloropropylene, 1,3-dichloropropylene and 2,3-dichloropropylene. The chain is Alkene monooxygenase system, oxygenase component subunit alpha from Xanthobacter autotrophicus (strain ATCC BAA-1158 / Py2).